Here is a 187-residue protein sequence, read N- to C-terminus: MNLKNHFLVAMPSMKDPFFQRSVIYICEHDSDGTMGLRINEPVQISLKGMLDQIELDNPSPIIFPQTLSQPVLNGGPVSDDRGFVLHSNKDNYLSSIQVTDELSVTTSKDILATLGTEYQPYKYLVALGYSGWEGGQLEKELSENTWLTLEADPSVIFDTPIPDRWRKALQLLGINPANLSSEIGHA.

Belongs to the UPF0301 (AlgH) family.

The polypeptide is UPF0301 protein VF_0434 (Aliivibrio fischeri (strain ATCC 700601 / ES114) (Vibrio fischeri)).